Here is a 144-residue protein sequence, read N- to C-terminus: Complexin-1 (144 aa).

Residues 1-10 (MVSFLGGGLL) show a composition bias toward gly residues. A disordered region spans residues 1 to 119 (MVSFLGGGLL…SGFPKNLDDL (119 aa)). Composition is skewed to basic and acidic residues over residues 18–27 (LEEKEDKKEG) and 36–86 (AEAK…EGRL). Positions 29-67 (EEEDPEIAEAKREAEEKRNEKYRKMEEEREVMRQGIRDK) form a coiled coil. The span at 103–112 (LQSSAQSSGF) shows a compositional bias: polar residues. Position 141 is a cysteine methyl ester (Cys-141). Cys-141 is lipidated: S-farnesyl cysteine. Positions 142 to 144 (NLQ) are cleaved as a propeptide — removed in mature form.

This sequence belongs to the complexin/synaphin family. In terms of assembly, binds to the SNARE core complex containing SNAP25, synaptobrevin and syntaxin-1. As to expression, expressed in a subset of neurons in the central nervous system, including large serotoninergic Retzius neurons and pressure-sensitive P cells.

Its subcellular location is the membrane. Positively regulates a late step in synaptic vesicle exocytosis. The protein is Complexin-1 (cpx1) of Hirudo medicinalis (Medicinal leech).